The sequence spans 2752 residues: Serine/arginine repetitive matrix protein 2 (2752 aa).

Methionine 1 is modified (N-acetylmethionine). Residues 60–92 adopt a coiled-coil conformation; sequence HERKRRVELRCLELEEMMEEQGYEEQQIQEKVA. N6-acetyllysine is present on lysine 101. Glycyl lysine isopeptide (Lys-Gly) (interchain with G-Cter in SUMO2) cross-links involve residues lysine 108 and lysine 130. A disordered region spans residues 141–2131; the sequence is ISDSYVDGSS…MSPTPLDRCR (1991 aa). Tyrosine 145 carries the phosphotyrosine modification. Lysine 169 carries the post-translational modification N6-acetyllysine. The span at 175 to 185 shows a compositional bias: low complexity; it reads RESSSSRSPTP. Composition is skewed to basic residues over residues 186–197 and 207–249; these read KQKKKKKKKDRG and RERK…KRSR. Residues 197–259 form a sufficient for RNA-binding region; the sequence is GRRSESSSPR…STTPAPKSRR (63 aa). Phosphoserine occurs at positions 220 and 222. The span at 263 to 290 shows a compositional bias: low complexity; sequence STSADSASSSDTSRSRSRSAAAKTHTTA. Position 286 is a phosphothreonine (threonine 286). A phosphoserine mark is found at serine 295, serine 297, serine 300, serine 322, and serine 323. Polar residues predominate over residues 313–333; that stretch reads PGTTSTQRPSSPETATKQPSS. A compositionally biased stretch (basic and acidic residues) spans 335–347; sequence YEDKDKDKKEKSA. Over residues 348-360 the composition is skewed to low complexity; the sequence is TRPSPSPERSSTG. Residues serine 351, serine 353, serine 357, and serine 358 each carry the phosphoserine modification. Threonine 359 and threonine 367 each carry phosphothreonine. At serine 377 the chain carries Phosphoserine. A compositionally biased stretch (polar residues) spans 380 to 398; it reads PLATTPLSQEPVNPPSEAS. Phosphothreonine occurs at positions 383 and 384. Phosphoserine is present on residues serine 387, serine 395, serine 398, serine 404, and serine 408. The segment covering 399–410 has biased composition (basic and acidic residues); the sequence is PTRDRSPPKSPE. Over residues 411 to 421 the composition is skewed to low complexity; the sequence is KLPQSSSSESS. Phosphoserine is present on residues serine 424, serine 435, serine 436, serine 437, serine 440, and serine 454. Residues 461–483 show a composition bias toward basic residues; sequence NRSHGRAKRDKSHSHTPSRRMGR. Residues serine 484, serine 486, serine 506, serine 508, serine 510, serine 534, serine 536, and serine 543 each carry the phosphoserine modification. A compositionally biased stretch (basic residues) spans 491–536; the sequence is KRGRSRSRTPTKRGHSRSRSPQWRRSRSAQRWGRSRSPQRRGRSRS. The span at 537 to 546 shows a compositional bias: low complexity; it reads PQRPGWSRSR. Basic residues-rich tracts occupy residues 547–564, 571–723, and 732–742; these read NTQRRGRSRSARRGRSHS, GRSR…RRGR, and NKSRTSQRRSR. Phosphoserine occurs at positions 702, 704, and 706. Phosphoserine is present on residues serine 778, serine 780, and serine 783. The span at 790–805 shows a compositional bias: low complexity; that stretch reads SQTPPRRSRSGSSQPK. Residues 806-816 show a composition bias toward basic residues; it reads AKSRTPPRRSR. Over residues 828–841 the composition is skewed to low complexity; the sequence is KTPSRQSHSSSSPH. Serine 846 and serine 854 each carry phosphoserine. Residues 849 to 869 show a composition bias toward polar residues; that stretch reads PPRQGSITSPQANEQSVTPQR. Threonine 856 bears the Phosphothreonine mark. Phosphoserine occurs at positions 857 and 864. The residue at position 866 (threonine 866) is a Phosphothreonine. Phosphoserine occurs at positions 871, 875, 876, 908, 935, 950, 952, 954, 957, 968, 970, 972, 973, and 974. Low complexity-rich tracts occupy residues 901-917 and 924-945; these read SSTPPRQSPSRSSSPQP and SPRQRSHSGSSSPSPSRVTSRT. Phosphothreonine is present on residues threonine 977 and threonine 983. Residues serine 992 and serine 994 each carry the phosphoserine modification. Tyrosine 996 carries the phosphotyrosine modification. At threonine 1003 the chain carries Phosphothreonine. Residues 1008–1017 are compositionally biased toward low complexity; sequence SLSGSKSPCP. Phosphoserine is present on residues serine 1010, serine 1014, serine 1024, serine 1028, serine 1032, and serine 1042. Over residues 1040–1064 the composition is skewed to polar residues; it reads KSSTPPGESYFGVSSLQLKGQSQTS. Threonine 1043 is modified (phosphothreonine). Residue tyrosine 1049 is modified to Phosphotyrosine. A phosphoserine mark is found at serine 1064, serine 1069, serine 1072, serine 1073, serine 1083, serine 1099, serine 1101, serine 1102, and serine 1103. A compositionally biased stretch (polar residues) spans 1071–1092; the sequence is TSSPEVRQSHSESPSLQSKSQT. Positions 1093–1104 are enriched in low complexity; the sequence is SPKGGRSRSSSP. Threonine 1106 carries the phosphothreonine modification. A phosphoserine mark is found at serine 1112, serine 1122, serine 1124, serine 1129, serine 1132, serine 1152, serine 1179, serine 1188, and serine 1198. Positions 1132-1159 are enriched in polar residues; sequence SPEQSRFQSDSSSYPTVDSNSLLGQSRL. Residues 1204–1214 are compositionally biased toward basic and acidic residues; it reads DTLRTPPRERS. Threonine 1208 is subject to Phosphothreonine. Phosphoserine occurs at positions 1214, 1219, 1227, 1254, 1257, 1258, 1266, 1270, and 1271. Polar residues predominate over residues 1216 to 1233; that stretch reads AGSSPETKEQNSALPTSS. Positions 1283 to 1292 are enriched in polar residues; the sequence is TLDQSQSQAS. 15 positions are modified to phosphoserine: serine 1311, serine 1318, serine 1320, serine 1326, serine 1329, serine 1336, serine 1348, serine 1368, serine 1382, serine 1383, serine 1384, serine 1387, serine 1401, serine 1403, and serine 1404. Over residues 1318–1328 the composition is skewed to polar residues; it reads SNSPLRENSFG. A compositionally biased stretch (polar residues) spans 1376–1386; it reads TRSSGHSSSEL. Position 1413 is a phosphothreonine (threonine 1413). A phosphoserine mark is found at serine 1415, serine 1421, serine 1423, and serine 1424. Threonine 1434 is subject to Phosphothreonine. The segment covering 1441–1452 has biased composition (low complexity); that stretch reads SGSSPGLRDGSG. Phosphoserine is present on residues serine 1444 and serine 1451. A Phosphothreonine modification is found at threonine 1453. Positions 1453-1463 are enriched in polar residues; sequence TPSRHSLSGSS. A phosphoserine mark is found at serine 1458, serine 1460, serine 1462, and serine 1463. Threonine 1472 is modified (phosphothreonine). Phosphoserine occurs at positions 1482 and 1483. Threonine 1492 carries the phosphothreonine modification. Residues serine 1497, serine 1499, serine 1501, and serine 1502 each carry the phosphoserine modification. A Phosphothreonine modification is found at threonine 1511. 4 positions are modified to phosphoserine: serine 1517, serine 1519, serine 1521, and serine 1522. A Phosphothreonine modification is found at threonine 1531. The segment covering 1534–1544 has biased composition (polar residues); that stretch reads GQRSRSGSSQE. Phosphoserine is present on residues serine 1537, serine 1539, serine 1541, serine 1542, and serine 1552. Over residues 1555–1567 the composition is skewed to basic and acidic residues; sequence ERSESDSSPDSKA. Positions 1568–1577 are enriched in basic residues; it reads KTRTPLRQRS. A phosphoserine mark is found at serine 1577, serine 1579, serine 1581, serine 1582, serine 1598, serine 1600, serine 1601, serine 1616, serine 1620, serine 1621, serine 1648, serine 1658, serine 1691, serine 1693, and serine 1694. Low complexity predominate over residues 1638–1657; the sequence is SGSSSKGRGPSPEGSSSTES. A compositionally biased stretch (basic residues) spans 1681-1691; the sequence is KSRTPPRRRSS. Threonine 1698 bears the Phosphothreonine mark. Residues serine 1727, serine 1729, serine 1731, serine 1732, serine 1762, and serine 1764 each carry the phosphoserine modification. Basic residues-rich tracts occupy residues 1769 to 1789 and 1798 to 1816; these read GLQRSRSRSRREKTRTTRRRD and SRRRQRSRSRSRVTRRRRG. Serine 1818, serine 1822, serine 1854, serine 1857, serine 1876, and serine 1878 each carry phosphoserine. Basic residues predominate over residues 1834 to 1854; sequence SSRRRRGRSRTPPTSRKRSRS. Residues 1862–2068 are compositionally biased toward basic residues; that stretch reads KRSRSRASPA…PRTARGKRSL (207 aa). At threonine 1880 the chain carries Phosphothreonine. 2 positions are modified to phosphoserine: serine 1884 and serine 1890. Threonine 1892 carries the post-translational modification Phosphothreonine. Serine 1893, serine 1916, serine 1919, serine 1923, and serine 1925 each carry phosphoserine. Threonine 1927 and threonine 1931 each carry phosphothreonine. Serine 1946 and serine 1948 each carry phosphoserine. A phosphothreonine mark is found at threonine 1950 and threonine 1954. Residues serine 1958 and serine 1960 each carry the phosphoserine modification. Threonine 1962 and threonine 1966 each carry phosphothreonine. Phosphoserine is present on residues serine 1970, serine 1972, and serine 1975. A Phosphothreonine modification is found at threonine 1978. Serine 1984, serine 1987, serine 1996, serine 1999, serine 2008, serine 2011, serine 2018, and serine 2020 each carry phosphoserine. The residue at position 2022 (threonine 2022) is a Phosphothreonine. Residues serine 2030 and serine 2032 each carry the phosphoserine modification. Threonine 2034 is modified (phosphothreonine). 4 positions are modified to phosphoserine: serine 2042, serine 2044, serine 2046, and serine 2067. Threonine 2069 carries the post-translational modification Phosphothreonine. Residues 2070–2095 are compositionally biased toward low complexity; that stretch reads RSPPAIRRRSASGSSSDRSRSATPPA. A phosphoserine mark is found at serine 2071 and serine 2090. Residue threonine 2092 is modified to Phosphothreonine. Over residues 2097-2124 the composition is skewed to polar residues; sequence RNHSGSRTPPVALNSSRMSCFSRPSMSP. A phosphoserine mark is found at serine 2100 and serine 2102. Residue threonine 2104 is modified to Phosphothreonine. 4 positions are modified to phosphoserine: serine 2118, serine 2121, serine 2123, and serine 2132. The residue at position 2144 (threonine 2144) is a Phosphothreonine. Residues arginine 2194, arginine 2207, arginine 2231, and arginine 2246 each carry the omega-N-methylarginine modification. Phosphoserine is present on serine 2272. 2 positions are modified to omega-N-methylarginine: arginine 2274 and arginine 2288. Phosphothreonine occurs at positions 2289, 2291, and 2302. Residue serine 2310 is modified to Phosphoserine. Positions 2311-2342 are disordered; that stretch reads LTGSGTPPTAANYPSSSRTPQAPASANLVGPR. Phosphothreonine occurs at positions 2316 and 2329. Over residues 2317-2334 the composition is skewed to polar residues; sequence PPTAANYPSSSRTPQAPA. Residue serine 2335 is modified to Phosphoserine. An Omega-N-methylarginine modification is found at arginine 2342. Phosphoserine is present on residues serine 2343, serine 2368, and serine 2376. At threonine 2381 the chain carries Phosphothreonine. At serine 2382 the chain carries Phosphoserine. Arginine 2384 is modified (asymmetric dimethylarginine; alternate). Position 2384 is an omega-N-methylarginine; alternate (arginine 2384). A disordered region spans residues 2389 to 2752; it reads AYERVSGRTS…PMRHRSSRSP (364 aa). Residues serine 2394, serine 2398, and serine 2407 each carry the phosphoserine modification. A Phosphothreonine modification is found at threonine 2409. Phosphoserine occurs at positions 2412, 2415, 2426, 2429, 2449, and 2453. Residues 2426–2439 are compositionally biased toward polar residues; that stretch reads SPSSRMGQAPSQSL. Residues 2455 to 2473 are compositionally biased toward polar residues; that stretch reads FSDQSRCLIAQTTPVAGSQ. Low complexity-rich tracts occupy residues 2474 to 2487, 2515 to 2526, and 2533 to 2567; these read SLSSGAVATTTSSA, AQQPSALAALQP, and SSSSSSSSSSSSSSSSSSSSSSSSGSSSSDSEGSS. The residue at position 2581 (serine 2581) is a Phosphoserine. At threonine 2583 the chain carries Phosphothreonine. Residue lysine 2587 forms a Glycyl lysine isopeptide (Lys-Gly) (interchain with G-Cter in SUMO2) linkage. Threonine 2599 is subject to Phosphothreonine. The segment covering 2608–2648 has biased composition (low complexity); the sequence is SSSSSSSSSSSSSSSSSSSSSSSSSSSSSSSSSSSSSSSSS. The segment covering 2651-2668 has biased composition (pro residues); that stretch reads PAKPGPQALPKPASPKKP. A phosphoserine mark is found at serine 2664, serine 2675, serine 2677, serine 2684, serine 2688, serine 2690, serine 2692, serine 2694, serine 2702, and serine 2706. Residues 2669-2689 are compositionally biased toward basic and acidic residues; it reads PPGERRSRSPRKPIDSLRDSR. Residues 2707–2716 are compositionally biased toward low complexity; sequence PRDQQSSSSE. Residues 2717-2729 are compositionally biased toward basic and acidic residues; sequence RGSRRGQRGDSRS. Residue threonine 2738 is modified to Phosphothreonine. Serine 2740 carries the post-translational modification Phosphoserine. Positions 2743–2752 are enriched in basic residues; that stretch reads PMRHRSSRSP.

Belongs to the CWC21 family. Component of pre-catalytic, catalytic and post-catalytic spliceosome complexes. Found in a pre-mRNA splicing complex with SFRS4, SFRS5, SNRP70, SNRPA1, SRRM1 and SRRM2. Component of the minor spliceosome, which splices U12-type introns. Interacts with DHX8. Interacts with CACTIN. In terms of tissue distribution, expressed in liver, placenta, and white blood cells.

It localises to the nucleus. The protein localises to the nucleus speckle. Required for pre-mRNA splicing as component of the spliceosome. As a component of the minor spliceosome, involved in the splicing of U12-type introns in pre-mRNAs. The chain is Serine/arginine repetitive matrix protein 2 (SRRM2) from Homo sapiens (Human).